The following is a 679-amino-acid chain: Glutamine-dependent NAD(+) synthetase (679 aa).

Residues 12–276 (VRVAACTHHT…VRRSVADVDT (265 aa)) enclose the CN hydrolase domain. The active-site Proton acceptor; for glutaminase activity is the glutamate 52. Catalysis depends on lysine 121, which acts as the For glutaminase activity. Tyrosine 127 is a binding site for L-glutamine. Cysteine 176 (nucleophile; for glutaminase activity) is an active-site residue. The L-glutamine site is built by serine 203 and arginine 209. A ligase region spans residues 337–679 (QQDCYEAYNI…DQIDREVPKG (343 aa)). 366–373 (GVSGGLDS) provides a ligand contact to ATP. Asparagine 456 contributes to the deamido-NAD(+) binding site. Threonine 480 provides a ligand contact to ATP. Residues glutamate 485, 490-493 (WSTY), and lysine 635 contribute to the deamido-NAD(+) site. Residues 639 to 658 (LPNGPKVSHGGALSPRGDWR) form a disordered region.

The protein in the C-terminal section; belongs to the NAD synthetase family.

The catalysed reaction is deamido-NAD(+) + L-glutamine + ATP + H2O = L-glutamate + AMP + diphosphate + NAD(+) + H(+). Its pathway is cofactor biosynthesis; NAD(+) biosynthesis; NAD(+) from deamido-NAD(+) (L-Gln route): step 1/1. Its function is as follows. Catalyzes the ATP-dependent amidation of deamido-NAD to form NAD. Uses L-glutamine as a nitrogen source. This is Glutamine-dependent NAD(+) synthetase from Mycobacterium bovis (strain ATCC BAA-935 / AF2122/97).